We begin with the raw amino-acid sequence, 600 residues long: NADH-quinone oxidoreductase subunit C/D (600 aa).

Residues 1–190 (MVNNMTDLTA…SPFELTKAKQ (190 aa)) form an NADH dehydrogenase I subunit C region. Residues 214–600 (DFMFLNLGPN…IDFVMSDVDR (387 aa)) form an NADH dehydrogenase I subunit D region.

This sequence in the N-terminal section; belongs to the complex I 30 kDa subunit family. It in the C-terminal section; belongs to the complex I 49 kDa subunit family. In terms of assembly, NDH-1 is composed of 13 different subunits. Subunits NuoB, CD, E, F, and G constitute the peripheral sector of the complex.

The protein localises to the cell inner membrane. It catalyses the reaction a quinone + NADH + 5 H(+)(in) = a quinol + NAD(+) + 4 H(+)(out). Its function is as follows. NDH-1 shuttles electrons from NADH, via FMN and iron-sulfur (Fe-S) centers, to quinones in the respiratory chain. The immediate electron acceptor for the enzyme in this species is believed to be ubiquinone. Couples the redox reaction to proton translocation (for every two electrons transferred, four hydrogen ions are translocated across the cytoplasmic membrane), and thus conserves the redox energy in a proton gradient. This is NADH-quinone oxidoreductase subunit C/D from Escherichia coli O157:H7.